The sequence spans 870 residues: NEDD4-like E3 ubiquitin-protein ligase WWP2 (870 aa).

Positions Met1 to Thr117 constitute a C2 domain. Residues Ser150–Asp300 form a disordered region. A compositionally biased stretch (polar residues) spans Pro152 to Thr171. The segment covering Gly198–Ser208 has biased composition (low complexity). Ser211 carries the post-translational modification Phosphoserine. Composition is skewed to polar residues over residues Val222 to Val235 and Ser262 to Thr289. Residues Gln290 to Asp300 show a composition bias toward low complexity. 4 consecutive WW domains span residues Asp300 to Pro333, Arg330 to Ala363, Gly405 to Thr437, and Pro444 to Pro477. The 335-residue stretch at Lys536–Glu870 folds into the HECT domain. The active-site Glycyl thioester intermediate is the Cys838.

As to quaternary structure, interacts with SCNN1A, SCNN1B, SCNN1G, WBP1, WBP2 and ATN1. Interacts with ERBB4, NDFIP1 and NDFIP2. Interacts with ARRDC4. Interacts with POU5F1, RBP1, EGR2 and SLC11A2. Interacts (via WW domains) with ARRDC1 (via PPxY motifs); ubiquitinates ARRDC1. Interacts (via WW domains) with ARRDC2 and ARRDC3. Autoubiquitinated. Ubiquitinated by the SCF(FBXL15) complex, leading to its degradation by the proteasome.

Its subcellular location is the nucleus. The enzyme catalyses S-ubiquitinyl-[E2 ubiquitin-conjugating enzyme]-L-cysteine + [acceptor protein]-L-lysine = [E2 ubiquitin-conjugating enzyme]-L-cysteine + N(6)-ubiquitinyl-[acceptor protein]-L-lysine.. The protein operates within protein modification; protein ubiquitination. Activated by NDFIP1- and NDFIP2-binding. In terms of biological role, E3 ubiquitin-protein ligase which accepts ubiquitin from an E2 ubiquitin-conjugating enzyme in the form of a thioester and then directly transfers the ubiquitin to targeted substrates. Polyubiquitinates POU5F1 by 'Lys-63'-linked conjugation and promotes it to proteasomal degradation; regulates POU5F1 protein level during differentiation of embryonal carcinoma cells (ECCs) but not in undifferentiated ECCs and embryonic stem cells (ESCs). Ubiquitinates EGR2 and promotes it to proteasomal degradation; in T-cells the ubiquitination inhibits activation-induced cell death. Ubiquitinates SLC11A2; the ubiquitination is enhanced by presence of NDFIP1 and NDFIP2. Ubiquitinates RPB1 and promotes it to proteasomal degradation. The chain is NEDD4-like E3 ubiquitin-protein ligase WWP2 (Wwp2) from Mus musculus (Mouse).